Reading from the N-terminus, the 79-residue chain is uncharacterized protein (79 aa).

The N-terminal stretch at 1 to 33 (MRLSIRAIVLFALVWIGLLMSGYGVLVGSKVNA) is a signal peptide.

This is an uncharacterized protein from Salmonella paratyphi A (strain ATCC 9150 / SARB42).